Reading from the N-terminus, the 566-residue chain is Transcription factor P14E8.02 (566 aa).

Residues 1 to 32 (MNISSQNVLLPSPIPSSSPMASHKKSWLSKHP) are disordered. Serine 73 is subject to Phosphoserine. In terms of domain architecture, FHA spans 86 to 137 (NKIGRSSQQCDHVLSTVDKAISRVHAIVTCTQDRMIIECVGWNGMIVSDKMR). Disordered regions lie at residues 191–217 (EENREPMSPSPQEALPLMPSSPPSQDY), 269–291 (DCSKNTQLKPSFLPKNTDDLLNG), 312–334 (ESDDLDKNEEISEGEEYTPIEES), and 364–437 (FTNH…TKEN). A compositionally biased stretch (acidic residues) spans 314 to 330 (DDLDKNEEISEGEEYTP). 2 stretches are compositionally biased toward polar residues: residues 373-383 (NSNITTSNDSP) and 414-428 (DENTNDSNESLPSSH). Serine 379 and serine 382 each carry phosphoserine.

Belongs to the PLM2/TOS4 family.

Its subcellular location is the nucleus. Functionally, probable transcriptional regulatory protein Required for G1/S progression. The polypeptide is Transcription factor P14E8.02 (Schizosaccharomyces pombe (strain 972 / ATCC 24843) (Fission yeast)).